A 215-amino-acid polypeptide reads, in one-letter code: LysM and putative peptidoglycan-binding domain-containing protein 1 (215 aa).

The LysM domain occupies leucine 37–isoleucine 81. Polar residues-rich tracts occupy residues glycine 86–glutamate 103 and glycine 173–serine 189. Disordered stretches follow at residues glycine 86–phenylalanine 133 and alanine 148–serine 203.

This is LysM and putative peptidoglycan-binding domain-containing protein 1 (lysmd1) from Xenopus laevis (African clawed frog).